Consider the following 375-residue polypeptide: Chaperone protein DnaJ (375 aa).

The region spanning 5–70 (DFYEVLGVEK…QKRAQYDQFG (66 aa)) is the J domain. The segment at 134–216 (GVEKEVSITK…CKGKGTVRKQ (83 aa)) adopts a CR-type zinc-finger fold. The Zn(2+) site is built by C147, C150, C164, C167, C190, C193, C204, and C207. CXXCXGXG motif repeat units follow at residues 147–154 (CETCTGTG), 164–171 (CPKCNGSG), 190–197 (CDMCGGKG), and 204–211 (CSDCKGKG).

Belongs to the DnaJ family. Homodimer. Zn(2+) serves as cofactor.

It is found in the cytoplasm. In terms of biological role, participates actively in the response to hyperosmotic and heat shock by preventing the aggregation of stress-denatured proteins and by disaggregating proteins, also in an autonomous, DnaK-independent fashion. Unfolded proteins bind initially to DnaJ; upon interaction with the DnaJ-bound protein, DnaK hydrolyzes its bound ATP, resulting in the formation of a stable complex. GrpE releases ADP from DnaK; ATP binding to DnaK triggers the release of the substrate protein, thus completing the reaction cycle. Several rounds of ATP-dependent interactions between DnaJ, DnaK and GrpE are required for fully efficient folding. Also involved, together with DnaK and GrpE, in the DNA replication of plasmids through activation of initiation proteins. In Clostridium tetani (strain Massachusetts / E88), this protein is Chaperone protein DnaJ.